A 456-amino-acid polypeptide reads, in one-letter code: tRNA-2-methylthio-N(6)-dimethylallyladenosine synthase (456 aa).

In terms of domain architecture, MTTase N-terminal spans 17 to 135 (KLYLIQSFGC…LPRMIHQVQE (119 aa)). [4Fe-4S] cluster contacts are provided by Cys-26, Cys-62, Cys-96, Cys-172, Cys-176, and Cys-179. A Radical SAM core domain is found at 158–387 (RKDKLKAWVT…IELQNLISLE (230 aa)). In terms of domain architecture, TRAM spans 390–453 (QREEGRVLEV…PNLLEGEVVP (64 aa)).

Belongs to the methylthiotransferase family. MiaB subfamily. Monomer. It depends on [4Fe-4S] cluster as a cofactor.

Its subcellular location is the cytoplasm. It carries out the reaction N(6)-dimethylallyladenosine(37) in tRNA + (sulfur carrier)-SH + AH2 + 2 S-adenosyl-L-methionine = 2-methylsulfanyl-N(6)-dimethylallyladenosine(37) in tRNA + (sulfur carrier)-H + 5'-deoxyadenosine + L-methionine + A + S-adenosyl-L-homocysteine + 2 H(+). Catalyzes the methylthiolation of N6-(dimethylallyl)adenosine (i(6)A), leading to the formation of 2-methylthio-N6-(dimethylallyl)adenosine (ms(2)i(6)A) at position 37 in tRNAs that read codons beginning with uridine. This chain is tRNA-2-methylthio-N(6)-dimethylallyladenosine synthase, found in Desulforamulus reducens (strain ATCC BAA-1160 / DSM 100696 / MI-1) (Desulfotomaculum reducens).